The sequence spans 460 residues: Chromosomal replication initiator protein DnaA (460 aa).

The segment at 1–73 (MEISIDSLWS…ANVVQSILGH (73 aa)) is domain I, interacts with DnaA modulators. The interval 73–116 (HPVEIYITVAKGEEFEEIGGGGAWELPTTNSIYETPNQNRQPNT) is domain II. A domain III, AAA+ region region spans residues 117-333 (ELNAKYVFSR…GALTRALAYI (217 aa)). Gly-161, Gly-163, Lys-164, and Thr-165 together coordinate ATP. A domain IV, binds dsDNA region spans residues 334-460 (SIWGLPMTVA…MNSRSRKPSL (127 aa)).

Belongs to the DnaA family. Oligomerizes as a right-handed, spiral filament on DNA at oriC.

The protein localises to the cytoplasm. Plays an essential role in the initiation and regulation of chromosomal replication. ATP-DnaA binds to the origin of replication (oriC) to initiate formation of the DNA replication initiation complex once per cell cycle. Binds the DnaA box (a 9 base pair repeat at the origin) and separates the double-stranded (ds)DNA. Forms a right-handed helical filament on oriC DNA; dsDNA binds to the exterior of the filament while single-stranded (ss)DNA is stabiized in the filament's interior. The ATP-DnaA-oriC complex binds and stabilizes one strand of the AT-rich DNA unwinding element (DUE), permitting loading of DNA polymerase. After initiation quickly degrades to an ADP-DnaA complex that is not apt for DNA replication. Binds acidic phospholipids. This chain is Chromosomal replication initiator protein DnaA, found in Trichormus variabilis (strain ATCC 29413 / PCC 7937) (Anabaena variabilis).